The primary structure comprises 282 residues: Probable endonuclease 4 (282 aa).

Zn(2+)-binding residues include H69, H109, E145, D179, H182, H216, D229, H231, and E261.

The protein belongs to the AP endonuclease 2 family. Requires Zn(2+) as cofactor.

It carries out the reaction Endonucleolytic cleavage to 5'-phosphooligonucleotide end-products.. Functionally, endonuclease IV plays a role in DNA repair. It cleaves phosphodiester bonds at apurinic or apyrimidinic (AP) sites, generating a 3'-hydroxyl group and a 5'-terminal sugar phosphate. This Magnetococcus marinus (strain ATCC BAA-1437 / JCM 17883 / MC-1) protein is Probable endonuclease 4.